The sequence spans 257 residues: MQIHRLPAFSDNYIFVLHDPGQNIAAVVDPADPQPVLKKLAELGAELVAIFNTHHHSDHVGGNRTLLQAFPNTVVYGGEQDRGRIPGQQHFLKEGDQVSFAHRRAEVYFVPGHTRAHIAYYFPPTTGEEWGELFCGDTLFAGGCGRLFEGTPAQMVDSLSKLRNLPETTRVWCAHEYTLKNLQFALTVDSDNSHLKNRFKQVQNARNLSQPTVPSDIGLEKQTNPFLRWDQPHLIIHTKSNTPVQCFARLRGMKDQF.

The Zn(2+) site is built by H54, H56, D58, H59, H113, D137, and H175.

This sequence belongs to the metallo-beta-lactamase superfamily. Glyoxalase II family. Monomer. Requires Zn(2+) as cofactor.

The catalysed reaction is an S-(2-hydroxyacyl)glutathione + H2O = a 2-hydroxy carboxylate + glutathione + H(+). Its pathway is secondary metabolite metabolism; methylglyoxal degradation; (R)-lactate from methylglyoxal: step 2/2. In terms of biological role, thiolesterase that catalyzes the hydrolysis of S-D-lactoyl-glutathione to form glutathione and D-lactic acid. The polypeptide is Hydroxyacylglutathione hydrolase (Acaryochloris marina (strain MBIC 11017)).